Consider the following 226-residue polypeptide: Chalcone--flavanone isomerase 1 (226 aa).

Substrate-binding residues include threonine 52, asparagine 117, and threonine 194.

It belongs to the chalcone isomerase family.

The enzyme catalyses a chalcone = a flavanone.. The protein operates within secondary metabolite biosynthesis; flavonoid biosynthesis. In terms of biological role, catalyzes the intramolecular cyclization of bicyclic chalcones into tricyclic (S)-flavanones. Responsible for the isomerization of 4,2',4',6'-tetrahydroxychalcone (also termed chalcone) into naringenin. This Lotus japonicus (Lotus corniculatus var. japonicus) protein is Chalcone--flavanone isomerase 1 (CHI1).